A 34-amino-acid chain; its full sequence is Potassium channel toxin alpha-KTx 6.13 (34 aa).

4 cysteine pairs are disulfide-bonded: cysteine 3/cysteine 24, cysteine 9/cysteine 29, cysteine 13/cysteine 31, and cysteine 19/cysteine 34. Cysteine 34 is modified (cysteine amide).

This sequence belongs to the short scorpion toxin superfamily. Potassium channel inhibitor family. Alpha-KTx 06 subfamily. Expressed by the venom gland.

The protein localises to the secreted. Its function is as follows. Antagonist of Kv1/KCNA potassium channels. Shows a weak interaction with muscle-type nicotinic acetylcholine receptors (nAChR), since it inhibits alpha-bungarotoxin binding to both muscle-type nAChR from T.californica (IC(50)=490 nM). This suggests it probably weakly inhibits nAChR. The chain is Potassium channel toxin alpha-KTx 6.13 from Heterometrus spinifer (Asia giant forest scorpion).